The sequence spans 692 residues: Ribonuclease J (692 aa).

The interval 1-91 (MTDNNQNNEN…RNYAKEELDN (91 aa)) is disordered. Basic and acidic residues predominate over residues 9–25 (ENHENSSENSKDHHEAR). Residues 57–79 (HHKKEHRPNKKPNNHHKPKHASQ) show a composition bias toward basic residues. N6-acetyllysine occurs at positions 135 and 141. 6 residues coordinate Zn(2+): His209, His211, Asp213, His214, His278, and Asp300. 3 positions are modified to N6-acetyllysine: Lys324, Lys338, and Lys398. 501–505 (HVSGH) is a substrate binding site. Lys512 is modified (N6-acetyllysine). His527 contributes to the Zn(2+) binding site. Lys548, Lys635, and Lys650 each carry N6-acetyllysine.

Belongs to the metallo-beta-lactamase superfamily. RNA-metabolizing metallo-beta-lactamase-like family. Bacterial RNase J subfamily. As to quaternary structure, homodimer. Homotetramer; dimer of homodimers. Interacts with RNA helicase RhpA, might be a member of a minimal RNA degradosome complex. Zn(2+) serves as cofactor. Post-translationally, acetylated on nine lysine residues. Some of the residues are acetylated by multiple different mechanisms. RimL is partially responsible for the acetylation of Lys-324, Lys-398 and Lys-650. HPB8_1270 homolog is partially responsible for the acetylation of Lys-324, Lys-398, Lys-512 and Lys-650. Acetyl-phosphate-mediated non-enzymatic acetylation pathway takes part in the acetylation of Lys-135, Lys-324, Lys-398, Lys-512 and Lys-650. Acetylation of the remaining residues Lys-141, Lys-338, Lys-548 and Lys-635 occurs by a yet undetermined mechanism. Acetylation on a number of these residues is important for growth regulation and proper cell morphology.

It localises to the cytoplasm. With respect to regulation, catalytic activity is regulated by the balance between homodimers and homotetramers, with homotetramers being the active forms of this enzyme. Acetylation allosterically regulates the homooligomerization state and hence the catalytic activity. An RNase that has 5'-3' exoribonuclease and endoribonuclease activity. Degrades 5'-monophosphorylated ssRNA and dsRNA, considerably more active on ssRNA. Association with RhpA significantly increases the dsRNase activity. Degrades RNA substrate with hairpin structures at both ends with low activity, but presence of RhpA significantly increases the activity on this substrate. Stimulates ATPase activity of RNA helicase RhpA. Involved in stabilization of mRNA but apparently not rRNA. The protein is Ribonuclease J of Helicobacter pylori (strain J99 / ATCC 700824) (Campylobacter pylori J99).